Reading from the N-terminus, the 150-residue chain is uncharacterized protein (150 aa).

The protein belongs to the IIV-6 391R family.

This is an uncharacterized protein from Invertebrate iridescent virus 3 (IIV-3).